Reading from the N-terminus, the 297-residue chain is tRNA pseudouridine synthase B (297 aa).

The Nucleophile role is filled by D44.

It belongs to the pseudouridine synthase TruB family. Type 1 subfamily.

The enzyme catalyses uridine(55) in tRNA = pseudouridine(55) in tRNA. Functionally, responsible for synthesis of pseudouridine from uracil-55 in the psi GC loop of transfer RNAs. This Corynebacterium glutamicum (strain R) protein is tRNA pseudouridine synthase B.